The chain runs to 671 residues: DNA ligase (671 aa).

Residues 32 to 36 (DAEYD), 81 to 82 (SL), and Glu-113 contribute to the NAD(+) site. The N6-AMP-lysine intermediate role is filled by Lys-115. 4 residues coordinate NAD(+): Arg-136, Glu-173, Lys-290, and Lys-314. Cys-408, Cys-411, Cys-426, and Cys-432 together coordinate Zn(2+). Residues 593–671 (EIDSPFAGKT…EAEMIRLLGA (79 aa)) enclose the BRCT domain.

This sequence belongs to the NAD-dependent DNA ligase family. LigA subfamily. Mg(2+) serves as cofactor. The cofactor is Mn(2+).

It catalyses the reaction NAD(+) + (deoxyribonucleotide)n-3'-hydroxyl + 5'-phospho-(deoxyribonucleotide)m = (deoxyribonucleotide)n+m + AMP + beta-nicotinamide D-nucleotide.. In terms of biological role, DNA ligase that catalyzes the formation of phosphodiester linkages between 5'-phosphoryl and 3'-hydroxyl groups in double-stranded DNA using NAD as a coenzyme and as the energy source for the reaction. It is essential for DNA replication and repair of damaged DNA. The polypeptide is DNA ligase (Salmonella dublin (strain CT_02021853)).